The chain runs to 155 residues: Vasotocin-neurophysin VT 2 (155 aa).

The signal sequence occupies residues 1–20 (MSVCAVLLLCVAGLLCLSSA). A disulfide bridge links C21 with C26. At G29 the chain carries Glycine amide. Intrachain disulfides connect C42/C86, C45/C59, C53/C76, C60/C66, C93/C106, C100/C118, and C107/C112. A compositionally biased stretch (acidic residues) spans 119 to 128 (SEDSESEEPA). The tract at residues 119-139 (SEDSESEEPADQNTLGASPGE) is disordered.

Belongs to the vasopressin/oxytocin family.

It localises to the secreted. Its function is as follows. Vasotocin is an antidiuretic hormone. This is Vasotocin-neurophysin VT 2 from Catostomus commersonii (White sucker).